The following is a 255-amino-acid chain: tRNA pseudouridine synthase A (255 aa).

Aspartate 52 serves as the catalytic Nucleophile. Residue tyrosine 111 coordinates substrate.

This sequence belongs to the tRNA pseudouridine synthase TruA family. Homodimer.

The catalysed reaction is uridine(38/39/40) in tRNA = pseudouridine(38/39/40) in tRNA. Its function is as follows. Formation of pseudouridine at positions 38, 39 and 40 in the anticodon stem and loop of transfer RNAs. In Cereibacter sphaeroides (strain ATCC 17029 / ATH 2.4.9) (Rhodobacter sphaeroides), this protein is tRNA pseudouridine synthase A.